A 558-amino-acid polypeptide reads, in one-letter code: Eukaryotic translation initiation factor 3 subunit D (558 aa).

Positions 296-310 (EFDLLTVNETSVEPP) are RNA gate. The tract at residues 534-558 (DNTFESEGEEEDSDEEEQVKDAFQR) is disordered. The span at 537–551 (FESEGEEEDSDEEEQ) shows a compositional bias: acidic residues.

It belongs to the eIF-3 subunit D family. In terms of assembly, component of the eukaryotic translation initiation factor 3 (eIF-3) complex.

The protein localises to the cytoplasm. Its function is as follows. mRNA cap-binding component of the eukaryotic translation initiation factor 3 (eIF-3) complex, which is involved in protein synthesis of a specialized repertoire of mRNAs and, together with other initiation factors, stimulates binding of mRNA and methionyl-tRNAi to the 40S ribosome. The eIF-3 complex specifically targets and initiates translation of a subset of mRNAs involved in cell proliferation. In the eIF-3 complex, eif3d specifically recognizes and binds the 7-methylguanosine cap of a subset of mRNAs. This chain is Eukaryotic translation initiation factor 3 subunit D, found in Nasonia vitripennis (Parasitic wasp).